The chain runs to 431 residues: Lipid storage droplets surface-binding protein 1 (431 aa).

A disordered region spans residues 397-431 (KVTGSDGGNSNHRSSRRRQDPNHYSATHNNINGVY). Over residues 418 to 431 (NHYSATHNNINGVY) the composition is skewed to polar residues.

The protein belongs to the perilipin family.

The protein localises to the cytoplasm. It is found in the lipid droplet. Functionally, required for normal deposition of neutral lipids in the oocyte. The protein is Lipid storage droplets surface-binding protein 1 of Drosophila melanogaster (Fruit fly).